The following is a 481-amino-acid chain: uncharacterized protein (481 aa).

Belongs to the metallophosphoesterase superfamily.

This is an uncharacterized protein from Bacillus subtilis (strain 168).